Reading from the N-terminus, the 96-residue chain is UPF0235 protein YE3436 (96 aa).

The protein belongs to the UPF0235 family.

In Yersinia enterocolitica serotype O:8 / biotype 1B (strain NCTC 13174 / 8081), this protein is UPF0235 protein YE3436.